The chain runs to 203 residues: MDKAFDEIIGNSHTDSSSNHKVTRYRRRDLRNELGPRLGFAPSDAASRSKDRLYREREEPPLPKRIRISKIPLDVSDYTLDDMIKEFGSPIFSKIFDNKEDRTCIYEFEDPEVLEKIVERYNGHELHNAKIEVEIYQPQRKHSRMNAHNRRKQTAQEHGRDRPGSHYRQKPNRVSKKNKGREKNNTPTSVEALDAELDAYMKG.

Met-1 is subject to N-acetylmethionine. 2 disordered regions span residues Met-1–Pro-60 and Gln-137–Gly-203. Positions Asn-11–His-20 are enriched in polar residues. A compositionally biased stretch (basic and acidic residues) spans Ser-47–Pro-60. The region spanning Lys-64–Pro-138 is the RRM domain. Over residues Gln-139 to Gln-153 the composition is skewed to basic residues. The segment covering Thr-154–Gly-164 has biased composition (basic and acidic residues). Over residues Ser-165 to Gly-180 the composition is skewed to basic residues.

This sequence belongs to the YRA1 family. As to quaternary structure, associates with mRNPs. Interacts with YRA1.

Its subcellular location is the nucleus. Involved in export of poly(A) mRNAs from the nucleus. Recruited to the coding sequences as well as poly-A sites of active genes. The chain is RNA annealing protein YRA2 (YRA2) from Saccharomyces cerevisiae (strain YJM789) (Baker's yeast).